Here is a 243-residue protein sequence, read N- to C-terminus: Protein VERNALIZATION 1 (243 aa).

The MADS-box domain occupies 1-61 (MGRGKVQLKR…GKLYEFATDS (61 aa)). In terms of domain architecture, K-box spans 88 to 178 (QGNWCHEYRK…QKELVEKQKA (91 aa)). The stretch at 122 to 178 (LKELQQLEQQLESSLKHIRSRKNQLMHESISELQRKERSLQEENKALQKELVEKQKA) forms a coiled coil. A disordered region spans residues 173–243 (VEKQKAHTQQ…PPWMVSHISG (71 aa)). A compositionally biased stretch (polar residues) spans 179 to 192 (HTQQAQWEQTHPQT).

The protein resides in the nucleus. Functionally, component of a grass-specific mechanism of vernalization, a process by which prolonged cold exposure provides competence to flower in daylengths longer than 12 hours. Involved in the exit of vernalization and confers flowering competency at the expense of freezing tolerance, probably by promoting the expression of VRN3; this process is essential in cv. Bd29-1 for flowering but seems do not occur in cv. Bd21. This chain is Protein VERNALIZATION 1, found in Brachypodium distachyon (Purple false brome).